The primary structure comprises 102 residues: Protamine-2 (102 aa).

Disordered regions lie at residues 1 to 40 (MVRY…SPEH) and 67 to 102 (HRQQ…CRRH). S8, S10, and S37 each carry phosphoserine.

The protein belongs to the protamine P2 family. As to quaternary structure, interacts with TDRP. Post-translationally, proteolytic processing into mature chains is required for histone eviction during spermatogenesis. Transition proteins (TNP1 and TNP2) are required for processing. As to expression, testis.

Its subcellular location is the nucleus. It is found in the chromosome. Protamines substitute for histones in the chromatin of sperm during the haploid phase of spermatogenesis. They compact sperm DNA into a highly condensed, stable and inactive complex. The polypeptide is Protamine-2 (PRM2) (Pan troglodytes (Chimpanzee)).